A 272-amino-acid chain; its full sequence is uncharacterized protein (272 aa).

Positions 20 to 133 (PVLIFIPGAN…PPINTFLPDS (114 aa)) constitute an AB hydrolase-1 domain.

It belongs to the AB hydrolase superfamily.

This is an uncharacterized protein from Staphylococcus aureus (strain MSSA476).